Here is a 322-residue protein sequence, read N- to C-terminus: Helix-loop-helix 34 (322 aa).

The span at 1-11 (METNLSEEKQK) shows a compositional bias: basic and acidic residues. The segment at 1–23 (METNLSEEKQKPSKSQAQQRRQM) is disordered. Residues 8–62 (EKQKPSKSQAQQRRQMENYEFSQLANELPLARAISGQHIDKTTMVRLATAYIKLH) enclose the bHLH domain. PAS domains follow at residues 82 to 152 (DSLW…DLNW) and 203 to 276 (PTPV…FNLG).

In terms of assembly, efficient DNA binding requires dimerization with another bHLH protein. Expressed in a small subset of neurons, probably AVJL and AVJR. Expressed in the AVH neurons.

It localises to the nucleus. Its function is as follows. Transcription factor. Involved in specifying AVH neuron identity, acting in concert with unc-42. Involved in serotonin-mediated feeding behavior, probably acting by modulating expression of genes involved in glutamate signaling. The polypeptide is Helix-loop-helix 34 (hlh-34) (Caenorhabditis elegans).